Here is a 374-residue protein sequence, read N- to C-terminus: Beta-lytic metalloendopeptidase (374 aa).

The first 24 residues, 1-24 (MKKISKAGLGLALVCALATIGGNA), serve as a signal peptide directing secretion. Positions 25–195 (ARRATAQRRG…RQGRPGRAAV (171 aa)) are excised as a propeptide. The disordered stretch occupies residues 128 to 187 (PTRQGAGDAGPRQSAAGAVRAFRRQRAGGRAARRRRVPAGLRPPVQRTAPGQGGFGPLRQ). Residues 148–164 (AFRRQRAGGRAARRRRV) show a composition bias toward basic residues. Cys-261 and Cys-307 are joined by a disulfide. Residues His-316 and His-318 each coordinate Zn(2+). An intrachain disulfide couples Cys-351 to Cys-364.

This sequence belongs to the peptidase M23A family. It depends on Zn(2+) as a cofactor.

Its subcellular location is the secreted. The enzyme catalyses Cleavage of N-acetylmuramoyl-|-Ala, and of the insulin B chain at 23-Gly-|-Phe-24 &gt; 18-Val-|-Cys(SO3H).. The chain is Beta-lytic metalloendopeptidase from Achromobacter lyticus.